The following is a 489-amino-acid chain: Leukocyte immunoglobulin-like receptor subfamily A member 1 (489 aa).

A signal peptide spans 1–16 (MTPIVTVLICLRLSLG). At 17-461 (PRTHVQAGTL…SHPQDYTVEN (445 aa)) the chain is on the extracellular side. 4 Ig-like C2-type domains span residues 27–116 (PKPT…PLEL), 119–224 (TGAY…GVSK), 226–315 (PSLS…DPLD), and 326–415 (PFIS…SDSL). A disulfide bridge connects residues cysteine 49 and cysteine 98. An N-linked (GlcNAc...) asparagine glycan is attached at asparagine 140. 3 disulfide bridges follow: cysteine 145/cysteine 197, cysteine 157/cysteine 167, and cysteine 246/cysteine 297. Residues asparagine 281, asparagine 302, and asparagine 341 are each glycosylated (N-linked (GlcNAc...) asparagine). An intrachain disulfide couples cysteine 346 to cysteine 397. The tract at residues 425–453 (TLSPPQNKSDSKAGAANTLSPSQNKTASH) is disordered. N-linked (GlcNAc...) asparagine glycosylation is found at asparagine 431 and asparagine 448. Residues 441 to 453 (NTLSPSQNKTASH) are compositionally biased toward polar residues. The helical transmembrane segment at 462-482 (LIRMGIAGLVLVVLGILLFEA) threads the bilayer. Residues 483–489 (QHSQRSL) lie on the Cytoplasmic side of the membrane.

In terms of tissue distribution, detected in monocytes and B-cells.

Its subcellular location is the membrane. In terms of biological role, may act as receptor for class I MHC antigens. This chain is Leukocyte immunoglobulin-like receptor subfamily A member 1 (LILRA1), found in Homo sapiens (Human).